The primary structure comprises 1372 residues: Paired amphipathic helix protein Sin3-like 1 (1372 aa).

The interval 1 to 50 (MKRIRDDVYASGSQFRRPLGSSRGQLCGQSPVHGSGDTEEEEEGGSRRVS) is disordered. 2 PAH domains span residues 51–121 (QKLT…LPKG) and 136–206 (KTVE…LPAS). Low complexity predominate over residues 210-222 (HSAAQHSRSQAQQ). Disordered regions lie at residues 210 to 244 (HSAA…ERRR) and 272 to 323 (REQR…SGSA). Residues 272 to 315 (REQRKRLDKENRARRGRDLDDREAGQDNLHHFPEKRKSSRRAEA) show a composition bias toward basic and acidic residues. Positions 331-400 (LKSMYKQAFV…DEFNQFFERC (70 aa)) constitute a PAH 3 domain. Disordered stretches follow at residues 764–783 (DVNH…GGDT), 791–817 (LKSA…NKDS), and 934–1056 (GLRS…AEGM). Over residues 938–957 (DSSKGTRNSDDPEGPSRNEK) the composition is skewed to basic and acidic residues. Acidic residues-rich tracts occupy residues 990-1013 (AEAE…DSEN) and 1028-1042 (SQDE…EHDE). Ser1049 bears the Phosphoserine mark.

As to quaternary structure, interacts (via PAH3) with ALY2. Interacts (via PAH2) with TBP1. Interacts with ALY3, GATA21, TRP2, TKI1, VAL1, SKP1B, FBX5 and PUB14.

It localises to the nucleus. Acts as a transcriptional repressor. A histone deacetylase (HDAC) activity is required for transcription repression. May play a role in telomere stability. In Arabidopsis thaliana (Mouse-ear cress), this protein is Paired amphipathic helix protein Sin3-like 1 (SNL1).